The primary structure comprises 1331 residues: Sodium-dependent transporter bedraggled (1331 aa).

The disordered stretch occupies residues 1–62 (MSSKEQQAAG…QLEHEQFGLS (62 aa)). Residues 16–25 (NSNAYSSLPP) show a composition bias toward polar residues. A compositionally biased stretch (gly residues) spans 28–43 (TGAGCSGAALGSGTGT). The N-linked (GlcNAc...) asparagine glycan is linked to N168. Disordered stretches follow at residues 221–284 (EPRT…TEPV) and 363–473 (QTNA…SASS). The span at 258 to 282 (KTFSCSLRPTSQIASSSGSLETSTE) shows a compositional bias: polar residues. Basic and acidic residues predominate over residues 369–383 (SSEEPRPRQYGRRLE). Polar residues predominate over residues 413–436 (LQDTPTHPIMSTCSELSSARSSRM). Residues 437–453 (PSPVSLPSDSSSSGSSS) are compositionally biased toward low complexity. Over residues 463-473 (VQTTTMCSASS) the composition is skewed to polar residues. 3 consecutive transmembrane segments (helical) span residues 505–525 (LALI…VLTI), 531–551 (FLLQ…WLQM), and 567–587 (ISPI…FLAL). Residues N627 and N631 are each glycosylated (N-linked (GlcNAc...) asparagine). 4 consecutive transmembrane segments (helical) span residues 667–687 (QLAF…CKGL), 696–716 (IIYT…VYVV), 741–761 (TAAT…VIAI), and 778–798 (AILL…LALC). An N-linked (GlcNAc...) asparagine glycan is attached at N857. A helical transmembrane segment spans residues 890–910 (WVWAAVAFATFAGFGLAQLCV). N921 carries an N-linked (GlcNAc...) asparagine glycan. 4 helical membrane passes run 926-946 (VLLS…EMGI), 956-976 (LGGS…VFLI), 998-1018 (AFLA…LSVV), and 1044-1064 (MGSL…IIQI). 3 disordered regions span residues 1086 to 1136 (PEEG…SYTT), 1169 to 1238 (SLDA…ASTL), and 1256 to 1275 (VRHR…TLPR). Polar residues-rich tracts occupy residues 1097–1115 (ARQT…TTEG) and 1186–1196 (ILTNPAGSSFN). Over residues 1197-1209 (ADPSPASSSSPES) the composition is skewed to low complexity.

It belongs to the sodium:neurotransmitter symporter (SNF) (TC 2.A.22) family.

It localises to the membrane. Putative sodium-dependent transporter which is required for viability, early imaginal disk development and adult motor coordination. Also has a role in the fate commitment of the R3/R4 photoreceptor cells. May function in ommatidial polarity by regulating the activity of the core polarity genes, acting upstream of (or in parallel to) Vang, dsh, pk, stan, and dgo, but downstream or independently of fz. This chain is Sodium-dependent transporter bedraggled, found in Drosophila melanogaster (Fruit fly).